The sequence spans 185 residues: Ribosome-recycling factor (185 aa).

This sequence belongs to the RRF family.

It is found in the cytoplasm. Its function is as follows. Responsible for the release of ribosomes from messenger RNA at the termination of protein biosynthesis. May increase the efficiency of translation by recycling ribosomes from one round of translation to another. This Neisseria meningitidis serogroup A / serotype 4A (strain DSM 15465 / Z2491) protein is Ribosome-recycling factor.